Here is a 264-residue protein sequence, read N- to C-terminus: Phosphonoacetaldehyde hydrolase (264 aa).

Residue Asp9 is the Nucleophile of the active site. Mg(2+) contacts are provided by Asp9 and Ala11. Lys50 acts as the Schiff-base intermediate with substrate in catalysis. Mg(2+) is bound at residue Asp183.

Belongs to the HAD-like hydrolase superfamily. PhnX family. Homodimer. Requires Mg(2+) as cofactor.

The catalysed reaction is phosphonoacetaldehyde + H2O = acetaldehyde + phosphate + H(+). Its function is as follows. Involved in phosphonate degradation. The sequence is that of Phosphonoacetaldehyde hydrolase from Bacillus cereus (strain ZK / E33L).